Consider the following 748-residue polypeptide: MVAVFHGPLVLGALLLLLALQHGASAEEPGFANRTGVHVAFLTDCQMYSDWQSVGAAFSFKMSGQPGSVIRVMCCSEEQAKNYNKGLLGMVDTWVAPDATHSKRTGDRYAAYNKPEAVIDWLDHNVPKHDYVLVLDSDMVLRRPFFVENMGPRKGLAVGARYTYMIGVANELAVRHIPHVPPRNDTLAGPFGRRADQVGGFFFIHKDDLKAMSHDWLKFSEDVRVDDQAYRLSGDVYAIHPGDRPWISEMYGYAFGAANHNVWHKWDTFSMIYPGYEPREGIPKLMHYGLLFEIGKNYSFDKHWHYDFDVTVCPPWDLKDPKRRTHGIFPEPPRPSSLRKVFPKNGDMASMDDFIGYYKELLAIETLATLNAAFCDYHISHCPPSEQLVSVCKEVFSLYNEAREFIQEAEASYDCQDFHPKCEEWKESGECTKNENYMTENCRKTCDKCNKIEKFFPETTTKELEEKLAKMSKELQPLSEDPDNKAGAGSAPKTESPLVIPKQEQPVAIIPRNEVPPKQEVRASSPAMQSSPPPSPPPASPPPVDSPPPMSPPPESPSPDKPPPKVVTRKALADPKKVTQKALMVRCYKLSLGIDEVKDCVKAAKEGKEYEVPKRTKATDEEEEAPKAKHAESHLTLDGEGATTESANDEVAKTKAPDASAEGNEGKKNIRVVQRDLEDLSLTQGDGKKGKAPVIDAPVVGPSLHSLLGRLNTWQALVLWLVVVVAFLALVPRIAKLRRRQRSGMRTE.

The signal sequence occupies residues Met-1–Ala-26. The Extracellular segment spans residues Glu-27–Arg-710. N-linked (GlcNAc...) asparagine glycosylation is found at Asn-33, Asn-184, and Asn-297. The ShKT domain occupies Cys-415 to Cys-449. 3 cysteine pairs are disulfide-bonded: Cys-415-Cys-449, Cys-422-Cys-442, and Cys-431-Cys-446. Disordered stretches follow at residues Glu-474 to Lys-576 and Glu-611 to Ile-670. A compositionally biased stretch (pro residues) spans Ser-531–Lys-565. The span at Glu-611–Leu-637 shows a compositional bias: basic and acidic residues. Residues Leu-711–Val-731 form a helical membrane-spanning segment. Over Pro-732 to Glu-748 the chain is Cytoplasmic.

It depends on Mn(2+) as a cofactor.

It is found in the membrane. Glycosyltransferase involved in the O-galactosylation of several proteins including extensins. Catalyzes the transfer of alpha-galactosyl to Ser residues. Hydroxylation of proline residues adjacent to the serine acceptor is required for activity. Utilizes selectively UDP-galactose as a donor nucleotide sugar. The protein is Peptidyl serine alpha-galactosyltransferase of Chlamydomonas reinhardtii (Chlamydomonas smithii).